Reading from the N-terminus, the 535-residue chain is Phosphoenolpyruvate carboxykinase (ATP) (535 aa).

The substrate site is built by Arg-59, Tyr-201, and Lys-207. ATP contacts are provided by residues Lys-207, His-226, and 243-251 (GLSGTGKTT). Mn(2+) contacts are provided by Lys-207 and His-226. Residue Asp-264 coordinates Mn(2+). ATP contacts are provided by residues Glu-292, Arg-328, 444–445 (RI), and Thr-450. Arg-328 is a substrate binding site.

It belongs to the phosphoenolpyruvate carboxykinase (ATP) family. Requires Mn(2+) as cofactor.

It localises to the cytoplasm. It carries out the reaction oxaloacetate + ATP = phosphoenolpyruvate + ADP + CO2. It participates in carbohydrate biosynthesis; gluconeogenesis. Its function is as follows. Involved in the gluconeogenesis. Catalyzes the conversion of oxaloacetate (OAA) to phosphoenolpyruvate (PEP) through direct phosphoryl transfer between the nucleoside triphosphate and OAA. The chain is Phosphoenolpyruvate carboxykinase (ATP) from Bacteroides fragilis (strain ATCC 25285 / DSM 2151 / CCUG 4856 / JCM 11019 / LMG 10263 / NCTC 9343 / Onslow / VPI 2553 / EN-2).